A 209-amino-acid chain; its full sequence is Orotate phosphoribosyltransferase (209 aa).

Residues R96, K100, H102, and 122–130 each bind 5-phospho-alpha-D-ribose 1-diphosphate; that span reads EDLISTGGS. S126 serves as a coordination point for orotate.

This sequence belongs to the purine/pyrimidine phosphoribosyltransferase family. PyrE subfamily. As to quaternary structure, homodimer. It depends on Mg(2+) as a cofactor.

The enzyme catalyses orotidine 5'-phosphate + diphosphate = orotate + 5-phospho-alpha-D-ribose 1-diphosphate. Its pathway is pyrimidine metabolism; UMP biosynthesis via de novo pathway; UMP from orotate: step 1/2. Catalyzes the transfer of a ribosyl phosphate group from 5-phosphoribose 1-diphosphate to orotate, leading to the formation of orotidine monophosphate (OMP). This chain is Orotate phosphoribosyltransferase, found in Lactococcus lactis subsp. cremoris (strain MG1363).